Reading from the N-terminus, the 323-residue chain is Alpha-tubulin N-acetyltransferase 1 (323 aa).

The 190-residue stretch at 1 to 190 (MEFPFDVDAL…NNFVIFEGFF (190 aa)) folds into the N-acetyltransferase domain. K56 bears the N6-acetyllysine; by autocatalysis mark. 124 to 137 (FYIHESVQRHGHGR) lines the acetyl-CoA pocket. K146 carries the post-translational modification N6-acetyllysine; by autocatalysis. Residue 160-169 (SQKLLKFLNK) participates in acetyl-CoA binding. A disordered region spans residues 196 to 239 (PPAPSLRATRHSRAAAVDPTPTAPARKLPPKRAEGDIKPYSSSD). Positions 209–220 (AAAVDPTPTAPA) are enriched in low complexity. Over residues 226 to 239 (KRAEGDIKPYSSSD) the composition is skewed to basic and acidic residues. Residues K233 and K244 each carry the N6-acetyllysine; by autocatalysis modification. The segment at 252–287 (PLNRAPRRATPPAHPPPRSSSLGNSPERGPLRPFVP) is disordered. Phosphoserine is present on residues S272 and S276. R305 bears the Asymmetric dimethylarginine mark. At S315 the chain carries Phosphoserine. R323 bears the Omega-N-methylarginine mark.

The protein belongs to the acetyltransferase ATAT1 family. As to quaternary structure, component of the BBSome complex. Interacts with AP2 alpha-adaptins, including AP2A2, but not with AP1 gamma-adaptin (AP1G1/AP1G2); this interaction is required for efficient alpha-tubulin acetylation, hence clathrin-coated pits are sites of microtubule acetylation. In terms of processing, autoacetylation strongly increases tubulin acetylation.

The protein resides in the cytoplasm. It is found in the membrane. Its subcellular location is the clathrin-coated pit. It localises to the cell junction. The protein localises to the focal adhesion. The protein resides in the cell projection. It is found in the axon. Its subcellular location is the cytoskeleton. It localises to the spindle. It carries out the reaction L-lysyl-[alpha-tubulin] + acetyl-CoA = N(6)-acetyl-L-lysyl-[alpha-tubulin] + CoA + H(+). In terms of biological role, specifically acetylates 'Lys-40' in alpha-tubulin on the lumenal side of microtubules. Promotes microtubule destabilization and accelerates microtubule dynamics; this activity may be independent of acetylation activity. Acetylates alpha-tubulin with a slow enzymatic rate, due to a catalytic site that is not optimized for acetyl transfer. Enters the microtubule through each end and diffuses quickly throughout the lumen of microtubules. Acetylates only long/old microtubules because of its slow acetylation rate since it does not have time to act on dynamically unstable microtubules before the enzyme is released. Required for normal sperm flagellar function. Promotes directional cell locomotion and chemotaxis, through AP2A2-dependent acetylation of alpha-tubulin at clathrin-coated pits that are concentrated at the leading edge of migrating cells. May facilitate primary cilium assembly. This chain is Alpha-tubulin N-acetyltransferase 1, found in Macaca mulatta (Rhesus macaque).